The following is a 283-amino-acid chain: UPF0273 protein STK_18300 (283 aa).

Residues 4–249 (LRVRTYIPGF…YLRITNVKAE (246 aa)) form the KaiC domain. 31–38 (GGPGTGKS) is a binding site for ATP. Positions 261 to 283 (MKKAVEESEEEKESIQEAEIEEE) are disordered. Over residues 267–283 (ESEEEKESIQEAEIEEE) the composition is skewed to acidic residues.

It belongs to the UPF0273 family.

The chain is UPF0273 protein STK_18300 from Sulfurisphaera tokodaii (strain DSM 16993 / JCM 10545 / NBRC 100140 / 7) (Sulfolobus tokodaii).